A 497-amino-acid chain; its full sequence is Probable cytosol aminopeptidase (497 aa).

Lys262 and Asp267 together coordinate Mn(2+). Residue Lys274 is part of the active site. Mn(2+) is bound by residues Asp285, Asp344, and Glu346. Residue Arg348 is part of the active site.

This sequence belongs to the peptidase M17 family. It depends on Mn(2+) as a cofactor.

It localises to the cytoplasm. The enzyme catalyses Release of an N-terminal amino acid, Xaa-|-Yaa-, in which Xaa is preferably Leu, but may be other amino acids including Pro although not Arg or Lys, and Yaa may be Pro. Amino acid amides and methyl esters are also readily hydrolyzed, but rates on arylamides are exceedingly low.. It carries out the reaction Release of an N-terminal amino acid, preferentially leucine, but not glutamic or aspartic acids.. In terms of biological role, presumably involved in the processing and regular turnover of intracellular proteins. Catalyzes the removal of unsubstituted N-terminal amino acids from various peptides. This is Probable cytosol aminopeptidase from Rhizobium etli (strain ATCC 51251 / DSM 11541 / JCM 21823 / NBRC 15573 / CFN 42).